The following is a 290-amino-acid chain: Glycine-N-acyltransferase-like protein 3 (290 aa).

The enzyme catalyses an acyl-CoA + glycine = an N-acylglycine + CoA + H(+). It catalyses the reaction (9Z)-octadecenoyl-CoA + glycine = N-(9Z-octadecenoyl)glycine + CoA + H(+). It carries out the reaction hexadecanoyl-CoA + glycine = N-hexadecanoylglycine + CoA + H(+). Its pathway is lipid metabolism. Functionally, catalyzes the conjugation of long-chain fatty acyl-CoA thioester and glycine to produce long-chain N-(fatty acyl)glycine, an intermediate in the primary fatty acid amide biosynthetic pathway. The sequence is that of Glycine-N-acyltransferase-like protein 3 from Mus musculus (Mouse).